Reading from the N-terminus, the 275-residue chain is 3-methyl-2-oxobutanoate hydroxymethyltransferase (275 aa).

Mg(2+) is bound by residues D44 and D83. Residues 44–45, D83, and K113 contribute to the 3-methyl-2-oxobutanoate site; that span reads DS. E115 is a Mg(2+) binding site. E182 serves as the catalytic Proton acceptor.

Belongs to the PanB family. Homodecamer; pentamer of dimers. The cofactor is Mg(2+).

Its subcellular location is the cytoplasm. The catalysed reaction is 3-methyl-2-oxobutanoate + (6R)-5,10-methylene-5,6,7,8-tetrahydrofolate + H2O = 2-dehydropantoate + (6S)-5,6,7,8-tetrahydrofolate. Its pathway is cofactor biosynthesis; (R)-pantothenate biosynthesis; (R)-pantoate from 3-methyl-2-oxobutanoate: step 1/2. Its function is as follows. Catalyzes the reversible reaction in which hydroxymethyl group from 5,10-methylenetetrahydrofolate is transferred onto alpha-ketoisovalerate to form ketopantoate. The polypeptide is 3-methyl-2-oxobutanoate hydroxymethyltransferase (Clostridioides difficile (strain 630) (Peptoclostridium difficile)).